Reading from the N-terminus, the 732-residue chain is B-cadherin (732 aa).

The propeptide occupies 1–6 (LRRQKR). 5 Cadherin domains span residues 6-114 (RDWV…KPQF), 115-227 (TQEV…APEF), 228-339 (DPKT…APVF), 340-443 (DPPL…VNDH), and 444-554 (GPEP…RVDT). At 6-554 (RDWVIPPIKV…SCAQKPRVDT (549 aa)) the chain is on the extracellular side. N137 carries an N-linked (GlcNAc...) asparagine glycan. A glycan (N-linked (GlcNAc...) asparagine) is linked at N410. Residues 555–580 (GVPIVLAVLGAVLALLLVLLLLLLLV) traverse the membrane as a helical segment. Residues 581 to 732 (RRRKVVKEPL…ELYGGGEDEE (152 aa)) lie on the Cytoplasmic side of the membrane.

As to expression, expressed in a wide variety of tissues.

Its subcellular location is the cell membrane. Functionally, cadherins are calcium-dependent cell adhesion proteins. They preferentially interact with themselves in a homophilic manner in connecting cells; cadherins may thus contribute to the sorting of heterogeneous cell types. B-cadherin may have important functions in neurogenesis, in at least some epithelia, and in embryogenesis. In Gallus gallus (Chicken), this protein is B-cadherin (K-CAM).